The following is a 131-amino-acid chain: uncharacterized protein (131 aa).

This is an uncharacterized protein from Archaeoglobus fulgidus (strain ATCC 49558 / DSM 4304 / JCM 9628 / NBRC 100126 / VC-16).